A 297-amino-acid chain; its full sequence is 4-hydroxy-tetrahydrodipicolinate synthase (297 aa).

T46 lines the pyruvate pocket. Y134 functions as the Proton donor/acceptor in the catalytic mechanism. The Schiff-base intermediate with substrate role is filled by K162. Position 204 (I204) interacts with pyruvate.

Belongs to the DapA family. Homotetramer; dimer of dimers.

Its subcellular location is the cytoplasm. The enzyme catalyses L-aspartate 4-semialdehyde + pyruvate = (2S,4S)-4-hydroxy-2,3,4,5-tetrahydrodipicolinate + H2O + H(+). Its pathway is amino-acid biosynthesis; L-lysine biosynthesis via DAP pathway; (S)-tetrahydrodipicolinate from L-aspartate: step 3/4. Its function is as follows. Catalyzes the condensation of (S)-aspartate-beta-semialdehyde [(S)-ASA] and pyruvate to 4-hydroxy-tetrahydrodipicolinate (HTPA). This is 4-hydroxy-tetrahydrodipicolinate synthase from Stenotrophomonas maltophilia (strain R551-3).